The chain runs to 2039 residues: Methylcytosine dioxygenase TET1 (2039 aa).

The span at 1–19 (MSRSRPAKPSKSVKTKLQK) shows a compositional bias: basic residues. Disordered stretches follow at residues 1-79 (MSRS…AGAA), 119-168 (VVTP…NGEQ), and 227-286 (DNEC…GFPD). Composition is skewed to basic and acidic residues over residues 53 to 65 (KRRD…EDKT) and 138 to 149 (IQDEPGVKHSEN). Polar residues-rich tracts occupy residues 150-168 (DSVP…NGEQ) and 241-265 (QRST…SQVE). The sufficient for binding to genomic CpG islands stretch occupies residues 512 to 657 (LDLTQGSQAA…NGPKSESMDC (146 aa)). The CXXC-type zinc finger occupies 567–608 (ERRKRKACGVCEPCQQKANCGECTYCKNRKNSHQICKKRKCE). Residues cysteine 574, cysteine 577, cysteine 580, cysteine 586, cysteine 589, cysteine 592, cysteine 602, and cysteine 607 each coordinate Zn(2+). Disordered regions lie at residues 613 to 670 (KPEA…QRLD), 711 to 735 (CDAN…NPSP), 820 to 859 (GAEP…VQPS), 882 to 906 (QLSE…HQKT), 964 to 993 (QGYP…SHPL), 1050 to 1129 (VRNA…KKQE), 1209 to 1240 (VEPS…QGQP), and 1322 to 1341 (KREA…DSAQ). Positions 653–670 (ESMDCSRRGHGEEEQRLD) are enriched in basic and acidic residues. Polar residues predominate over residues 825–835 (IFNNHPNTHSA). The segment covering 840–852 (HPPEKVPNKEPKD) has biased composition (basic and acidic residues). Residue serine 854 is modified to Phosphoserine. Over residues 884–894 (SEAPSESSSPS) the composition is skewed to low complexity. The segment covering 895-904 (KPEKDEEAHQ) has biased composition (basic and acidic residues). The span at 1053–1064 (AESTPESLVAKN) shows a compositional bias: polar residues. The span at 1094–1116 (KPKKAQKKARATPHANKRKKKPP) shows a compositional bias: basic residues. Polar residues-rich tracts occupy residues 1214–1227 (SLPT…SGGQ) and 1326–1341 (QTSS…DSAQ). Zn(2+)-binding residues include cysteine 1371, cysteine 1373, cysteine 1430, histidine 1456, and cysteine 1458. Arginine 1499 lines the 2-oxoglutarate pocket. Residues cysteine 1509, cysteine 1511, cysteine 1527, and cysteine 1536 each contribute to the Zn(2+) site. The interaction with DNA stretch occupies residues 1528–1541 (SWSMYFNGCKFGRS). A Glycyl lysine isopeptide (Lys-Gly) (interchain with G-Cter in ubiquitin) cross-link involves residue lysine 1537. Cysteine 1628 serves as a coordination point for Zn(2+). Position 1644 (cysteine 1644) interacts with 2-oxoglutarate. A Zn(2+)-binding site is contributed by histidine 1650. Fe cation contacts are provided by histidine 1652 and aspartate 1654. Position 1657 (asparagine 1657) interacts with substrate. Histidine 1685 provides a ligand contact to 2-oxoglutarate. Residues 1734–1743 (GKRAKMKQNH) show a composition bias toward basic residues. 2 disordered regions span residues 1734–1760 (GKRA…ASST) and 1830–1901 (AAHP…LPQL). Low complexity predominate over residues 1748 to 1760 (SHNTKSFSSASST). Positions 1850–1875 (TSPSEQLTSNQSNQQLPLLSNSQKLA) are enriched in polar residues. The segment covering 1880 to 1895 (EDERHPEADEPQHPED) has biased composition (basic and acidic residues). Histidine 1939 is a Fe cation binding site. 1954-1956 (RVS) contacts 2-oxoglutarate. 1960 to 1962 (YQH) is a substrate binding site. Histidine 1970 contacts Zn(2+).

This sequence belongs to the TET family. As to quaternary structure, interacts with SIN3A; recruits the transcriptional co-repressor SIN3A to gene promoters. Interacts with HCFC1. Interacts (via C-terminus) with OGT. Found in a complex composed of at least SINHCAF, SIN3A, HDAC1, SAP30, RBBP4, OGT and TET1. Interacts with QSER1. Interacts with NONO (via DNA-binding domain); this interaction recruits TET1 to genomic loci. Interacts with FOXA2; this interaction may recruit TET1 to specific enhancers to preserve their unmethylated status and hence allowing gene expression. Interacts with RNF2. Directly interacts (via C-terminus) with the DCAF1 component of the CRL4(VprBP) E3 ubiquitin-protein ligase complex. Interacts with UHRF1; this interaction induces the recruitment of TET1 to replicating heterochromatin. Interacts with DCAF1. Fe(2+) is required as a cofactor. Zn(2+) serves as cofactor. Glycosylated. Interaction with OGT leads to GlcNAcylation. In terms of processing, monoubiquitinated by the DCX (DDB1-CUL4-X-box) E3 ubiquitin-protein ligase complex called CRL4(VprBP) or CUL4A-RBX1-DDB1-DCAF1/VPRBP complex. Post-translationally, monoubiquitinated by the DCX (DDB1-CUL4-X-box) E3 ubiquitin-protein ligase complex called CRL4(VprBP) or CUL4A-RBX1-DDB1-DCAF1/VPRBP complex; this modification promotes binding to DNA. Expressed in germinal vesicle (GV) stage and MII-stage oocytes and in early embryos. Also detected somatic tissues, including brain, liver and kidney, but at very low levels. As to expression, predominantly expressed in early embryos. Also expressed in embryonic stem cells and in primordial germ cells. Expressed in adult tissues, including brain cortex, cerebellum, heart, kidney, liver, muscle and spleen, although at much lower levels than isoform 2. In the brain, expressed at higher levels in glial cells than in neurons. Expressed in placenta. Expressed in the pituitary, most probably in thyrotropes. In terms of tissue distribution, preferentially expressed in differentiated cells, including in cerebral cortex, cerebellum and thymus. Also expressed in heart, kidney, liver, muscle and spleen at much higher levels than isoform 1. In the brain, expressed at higher levels in neurons than in glial cells. Expressed in the olfactory bulb and in the mammary gland.

It localises to the nucleus. Its subcellular location is the chromosome. It carries out the reaction a 5-methyl-2'-deoxycytidine in DNA + 2-oxoglutarate + O2 = a 5-hydroxymethyl-2'-deoxycytidine in DNA + succinate + CO2. The catalysed reaction is a 5-hydroxymethyl-2'-deoxycytidine in DNA + 2-oxoglutarate + O2 = a 5-formyl-2'-deoxycytidine in DNA + succinate + CO2 + H2O. It catalyses the reaction a 5-formyl-2'-deoxycytidine in DNA + 2-oxoglutarate + O2 = a 5-carboxyl-2'-deoxycytidine in DNA + succinate + CO2 + H(+). Dioxygenase that plays a key role in active DNA demethylation, by catalyzing the sequential oxidation of the modified genomic base 5-methylcytosine (5mC) into 5-hydroxymethylcytosine (5hmC), 5-formylcytosine (5fC), and 5-carboxylcytosine (5caC). In addition to its role in DNA demethylation, plays a more general role in chromatin regulation by recruiting histone modifying protein complexes to alter histone marks and chromatin accessibility, leading to both activation and repression of gene expression. Plays therefore a role in many biological processes, including stem cell maintenance, T- and B-cell development, inflammation regulation, iron homeostasis, neural activity or DNA repair. Involved in the balance between pluripotency and lineage commitment of cells it plays a role in embryonic stem cells maintenance and inner cell mass cell specification. Together with QSER1, plays an essential role in the protection and maintenance of transcriptional and developmental programs to inhibit the binding of DNMT3A/3B and therefore de novo methylation. May play a role in the pancreatic beta-cell specification during development. In this context, may function as an upstream epigenetic regulator of PAX4 presumably through direct recruitment by FOXA2 to a PAX4 enhancer to preserve its unmethylated status, thereby potentiating PAX4 expression to adopt beta-cell fate during endocrine lineage commitment. Under DNA hypomethylation conditions, such as in female meiotic germ cells, may induce epigenetic reprogramming of pericentromeric heterochromatin (PCH), the constitutive heterochromatin of pericentromeric regions. PCH forms chromocenters in the interphase nucleus and chromocenters cluster at the prophase of meiosis. In this context, may also be essential for chromocenter clustering in a catalytic activity-independent manner, possibly through the recruitment polycomb repressive complex 1 (PRC1) to the chromocenters. During embryonic development, may be required for normal meiotic progression in oocytes and meiotic gene activation. Binds preferentially to DNA containing cytidine-phosphate-guanosine (CpG) dinucleotides over CpH (H=A, T, and C), hemimethylated-CpG and hemimethylated-hydroxymethyl-CpG. Its function is as follows. Dioxygenase that plays a key role in active DNA demethylation. Binds to promoters, particularly to those with high CG content. In hippocampal neurons, isoform 1 regulates the expression of a unique subset of genes compared to isoform 2, although some overlap between both isoforms, hence differentially regulates excitatory synaptic transmission. In hippocampal neuron cell cultures, isoform 1 controls both miniature excitatory postsynaptic current amplitude and frequency. Isoform 1 may regulate genes involved in hippocampal-dependent memory, leading to positive regulation of memory, contrary to isoform 2 that may decrease memory. Functionally, dioxygenase that plays a key role in active DNA demethylation. As isoform 1, binds to promoters, particularly to those with high CG content, however displays reduced global chromatin affinity compared with isoform 1, leading to decreased global DNA demethylation compared with isoform 1. Contrary to isoform 1, isoform 2 localizes during S phase to sites of ongoing DNA replication in heterochromatin, causing a significant de novo 5hmC formation, globally, and more so in heterochromatin, including LINE 1 interspersed DNA repeats leading to their activation. In hippocampal neurons, isoform 2 regulates the expression of a unique subset of genes compared with isoform 1, although some overlap between both isoforms, hence differentially regulating excitatory synaptic transmission. In hippocampal neuron cell cultures, isoform 2 controls miniature excitatory postsynaptic current frequency, but not amplitude. Isoform 2 may regulate genes involved in hippocampal-dependent memory, leading to negative regulation of memory, contrary to isoform 1 that may improve memory. In immature and partially differentiated gonadotrope cells, represses luteinizing hormone gene LHB expression directly and does not catalyze 5hmC at the gene promoter. This Mus musculus (Mouse) protein is Methylcytosine dioxygenase TET1 (Tet1).